The sequence spans 106 residues: MIVLITGASSGFGWEAAKLCVAKGHRVIGCARRTERLQALQKELGDAFFPLPFDIADADALNAAFERLPEDWRAIDVLVNNAGLALGQAPAHESRLADWEQMIATN.

4–28 contributes to the NADP(+) binding site; it reads LITGASSGFGWEAAKLCVAKGHRVI.

This sequence belongs to the short-chain dehydrogenases/reductases (SDR) family.

The polypeptide is Probable NADP-dependent dehydrogenase in aabA 3'region (Dichelobacter nodosus (Bacteroides nodosus)).